The primary structure comprises 108 residues: Translation initiation factor 1A (108 aa).

The 75-residue stretch at 11-85 (PSRDVPRPEE…NRCDILYKYG (75 aa)) folds into the S1-like domain.

Belongs to the eIF-1A family.

In terms of biological role, seems to be required for maximal rate of protein biosynthesis. Enhances ribosome dissociation into subunits and stabilizes the binding of the initiator Met-tRNA(I) to 40 S ribosomal subunits. The protein is Translation initiation factor 1A (eIF1A) of Saccharolobus solfataricus (strain ATCC 35092 / DSM 1617 / JCM 11322 / P2) (Sulfolobus solfataricus).